The chain runs to 192 residues: uncharacterized protein (192 aa).

Residues 7–29 form a helical; Signal-anchor membrane-spanning segment; the sequence is FIHSISGGSSLLSASEVFASAFF. A helical transmembrane segment spans residues 51-67; that stretch reads YFLCVLVSTFLNSLVII.

The protein resides in the membrane. This is an uncharacterized protein from Saccharomyces cerevisiae (strain ATCC 204508 / S288c) (Baker's yeast).